A 274-amino-acid polypeptide reads, in one-letter code: 2,3,4,5-tetrahydropyridine-2,6-dicarboxylate N-succinyltransferase (274 aa).

Substrate contacts are provided by Arg104 and Asp141.

The protein belongs to the transferase hexapeptide repeat family. In terms of assembly, homotrimer.

The protein resides in the cytoplasm. The catalysed reaction is (S)-2,3,4,5-tetrahydrodipicolinate + succinyl-CoA + H2O = (S)-2-succinylamino-6-oxoheptanedioate + CoA. The protein operates within amino-acid biosynthesis; L-lysine biosynthesis via DAP pathway; LL-2,6-diaminopimelate from (S)-tetrahydrodipicolinate (succinylase route): step 1/3. This chain is 2,3,4,5-tetrahydropyridine-2,6-dicarboxylate N-succinyltransferase, found in Edwardsiella ictaluri (strain 93-146).